A 114-amino-acid chain; its full sequence is uncharacterized protein (114 aa).

Its function is as follows. Possibly involved in pGI2 replication mechanism. This is an uncharacterized protein from Bacillus thuringiensis.